The chain runs to 534 residues: Lariat debranching enzyme A (534 aa).

A divalent metal cation is bound by residues C8, H10, D39, and N84. A lariat recognition loop region spans residues 124–154 (SGIFKSHDYRKGHFERPPYSKDTVRSAYHVR). A divalent metal cation-binding residues include H174, H226, and H228. 2 disordered regions span residues 386–439 (EEEK…QEDE) and 469–534 (SMAV…DEDE). The segment covering 388–400 (EKEDFDMTEDNEA) has biased composition (acidic residues). Residues 413 to 424 (STDTSILSTSVN) show a composition bias toward polar residues. A compositionally biased stretch (acidic residues) spans 428 to 439 (ITLEDDDEQEDE). A compositionally biased stretch (basic and acidic residues) spans 484-499 (ELDRSESSQTEGEGKQ).

It belongs to the lariat debranching enzyme family. Fe(2+) is required as a cofactor. It depends on Zn(2+) as a cofactor. The cofactor is Mn(2+).

It is found in the nucleus. Active in presence of diverse metals including Fe(2+), Zn(2+), Mn(2+). Also activated by Ca(2+). Binds two metal cations in two adjacent alpha and beta metal-binding pockets. Cleaves the 2'-5' phosphodiester linkage at the branch point of excised lariat intron RNA and converts them into linear molecules that can be subsequently degraded, thereby facilitating ribonucleotide turnover. Linked to its role in pre-mRNA processing mechanism, may also participate in retrovirus replication and have an antiviral cell-intrinsic defense function. The chain is Lariat debranching enzyme A (dbr1-a) from Xenopus laevis (African clawed frog).